The sequence spans 116 residues: Large ribosomal subunit protein bL19c (116 aa).

It belongs to the bacterial ribosomal protein bL19 family.

It localises to the plastid. The protein localises to the chloroplast. The chain is Large ribosomal subunit protein bL19c from Cyanidium caldarium (Red alga).